Consider the following 429-residue polypeptide: Cytochrome bc1 complex Rieske iron-sulfur subunit (429 aa).

The segment at 1–45 (MSRADDDAVGVPPTCGGRSDEEERRIVPGPNPQDGAKDGAKATAV) is disordered. 3 helical membrane-spanning segments follow: residues 96-116 (VAVW…IFLF), 137-157 (PLYG…AVLY), and 207-227 (FGVG…GGLI). Residues 316–410 (RNPVMLIRIK…ITIDTDGYLV (95 aa)) enclose the Rieske domain. Residues cysteine 353, histidine 355, cysteine 372, and histidine 375 each contribute to the [2Fe-2S] cluster site. A disulfide bridge connects residues cysteine 358 and cysteine 374.

It belongs to the Rieske iron-sulfur protein family. As to quaternary structure, the cytochrome bc1 complex is composed of a cytochrome b (QcrB), the Rieske iron-sulfur protein (QcrA) and a diheme cytochrome c (QcrC) subunit. [2Fe-2S] cluster is required as a cofactor.

The protein resides in the cell membrane. Its function is as follows. Iron-sulfur subunit of the cytochrome bc1 complex, an essential component of the respiratory electron transport chain required for ATP synthesis. The bc1 complex catalyzes the oxidation of menaquinol and the reduction of cytochrome c in the respiratory chain. The bc1 complex operates through a Q-cycle mechanism that couples electron transfer to generation of the proton gradient that drives ATP synthesis. The chain is Cytochrome bc1 complex Rieske iron-sulfur subunit (qcrA) from Mycobacterium bovis (strain ATCC BAA-935 / AF2122/97).